Here is a 230-residue protein sequence, read N- to C-terminus: RNA-binding riboflavin kinase RibR (230 aa).

This sequence belongs to the RibR family.

The enzyme catalyses riboflavin + ATP = FMN + ADP + H(+). Functionally, may be directly involved in the regulation of the rib genes. C-terminal part of RibR specifically binds to RFN of the rib leader of the riboflavin biosynthetic operon. The RFN element is a sequence within the rib-leader mRNA reported to serve as a receptor for an FMN-dependent riboswitch. Possibly, RibR produces the comodulator FMN through its own N-terminal flavokinase activity. FMN-activated RibR may stabilize the anti-anti terminator structure of RFN mRNA, causing transcription termination of the rib genes in trans. The sequence is that of RNA-binding riboflavin kinase RibR (ribR) from Bacillus subtilis (strain 168).